The primary structure comprises 670 residues: Pescadillo homolog (670 aa).

The stretch at 292–321 (GANQAQAKVKEAESKRSLMEEELLKVRELF) forms a coiled coil. In terms of domain architecture, BRCT spans 316-402 (KVRELFRGLT…QMLPVTGYRI (87 aa)). The interval 643-670 (RQRAEAKGKKLKEKKADNPYKKLPKWVQ) is disordered. The segment covering 644-662 (QRAEAKGKKLKEKKADNPY) has biased composition (basic and acidic residues).

This sequence belongs to the pescadillo family.

It localises to the nucleus. It is found in the nucleolus. Its subcellular location is the nucleoplasm. Functionally, required for maturation of ribosomal RNAs and formation of the large ribosomal subunit. The sequence is that of Pescadillo homolog from Leishmania braziliensis.